The primary structure comprises 357 residues: Retinoic acid-induced protein 3 (357 aa).

Topologically, residues 1-33 (MATTVPDGCRNGLKSKYYRLCDKAEAWGIVLET) are extracellular. Residues 34–54 (VATAGVVTSVAFMLTLPILVC) form a helical membrane-spanning segment. Over 55 to 68 (KVQDSNRRKMLPTQ) the chain is Cytoplasmic. Residues 69 to 89 (FLFLLGVLGIFGLTFAFIIGL) traverse the membrane as a helical segment. Topologically, residues 90 to 97 (DGSTGPTR) are extracellular. A helical transmembrane segment spans residues 98 to 118 (FFLFGILFSICFSCLLAHAVS). At 119–129 (LTKLVRGRKPL) the chain is on the cytoplasmic side. A helical transmembrane segment spans residues 130-150 (SLLVILGLAVGFSLVQDVIAI). The Extracellular segment spans residues 151 to 176 (EYIVLTMNRTNVNVFSELSAPRRNED). N-linked (GlcNAc...) asparagine glycosylation is present at asparagine 158. Residues 177–197 (FVLLLTYVLFLMALTFLMSSF) traverse the membrane as a helical segment. Residues 198 to 212 (TFCGSFTGWKRHGAH) are Cytoplasmic-facing. The chain crosses the membrane as a helical span at residues 213–233 (IYLTMLLSIAIWVAWITLLML). The Extracellular portion of the chain corresponds to 234–247 (PDFDRRWDDTILSS). A helical membrane pass occupies residues 248-268 (ALAANGWVFLLAYVSPEFWLL). Topologically, residues 269-357 (TKQRNPMDYP…KDYEVKKEGS (89 aa)) are cytoplasmic. Serine 301 carries the post-translational modification Phosphoserine. Residues tyrosine 317 and tyrosine 320 each carry the phosphotyrosine modification. Residue serine 345 is modified to Phosphoserine. 2 positions are modified to phosphotyrosine: tyrosine 347 and tyrosine 350.

This sequence belongs to the G-protein coupled receptor 3 family. As to quaternary structure, interacts (via its transmembrane domain) with EGFR. Post-translationally, phosphorylated in two conserved double-tyrosine motifs, Tyr-317/Tyr-320 and Tyr-347/Tyr-350, by EGFR; leading to inactivation of the tumor suppressive function of GPRC5A in lung cancer cells. Tyr-317 and Tyr-320 are the preferred residues responsible for EGFR-mediated GPRC5A phosphorylation. As to expression, expressed at high level in fetal and adult lung tissues but repressed in most human lung cancers. Constitutively expressed in fetal kidney and adult placenta, kidney, prostate, testis, ovary, small intestine, colon, stomach, and spinal cord at low to moderate levels. Not detectable in fetal heart, brain, and liver and adult heart, brain, liver, skeletal muscle, pancreas, spleen, thymus, and peripheral leukocytes. According to PubMed:10783259, expressed at low but detectable level in pancreas and heart.

The protein resides in the cell membrane. Its subcellular location is the cytoplasmic vesicle membrane. Its function is as follows. Orphan receptor. Could be involved in modulating differentiation and maintaining homeostasis of epithelial cells. This retinoic acid-inducible GPCR provide evidence for a possible interaction between retinoid and G-protein signaling pathways. Functions as a negative modulator of EGFR signaling. May act as a lung tumor suppressor. In Homo sapiens (Human), this protein is Retinoic acid-induced protein 3 (GPRC5A).